The sequence spans 660 residues: DNA primase (660 aa).

Residues Cys40–Cys64 form a CHC2-type zinc finger. Positions Gly94–Pro115 are disordered. The segment covering Val97–Gln110 has biased composition (basic and acidic residues). One can recognise a Toprim domain in the interval Asp261–Pro343. Positions 267, 311, and 313 each coordinate Mg(2+). Disordered stretches follow at residues Asp425–Tyr449 and Gln476–Glu519. Residues Gln428–Met442 are compositionally biased toward polar residues. Over residues Pro488 to Arg498 the composition is skewed to basic and acidic residues.

This sequence belongs to the DnaG primase family. As to quaternary structure, monomer. Interacts with DnaB. Zn(2+) is required as a cofactor. It depends on Mg(2+) as a cofactor.

It catalyses the reaction ssDNA + n NTP = ssDNA/pppN(pN)n-1 hybrid + (n-1) diphosphate.. RNA polymerase that catalyzes the synthesis of short RNA molecules used as primers for DNA polymerase during DNA replication. The chain is DNA primase from Pseudomonas putida (strain ATCC 47054 / DSM 6125 / CFBP 8728 / NCIMB 11950 / KT2440).